The sequence spans 284 residues: Tropomyosin (284 aa).

A coiled-coil region spans residues 1-273 (MDAIKKKMVA…KEKYKAISDE (273 aa)). Residues 110–130 (SGKLEEASKAADESERNRKVL) are compositionally biased toward basic and acidic residues. A disordered region spans residues 110–134 (SGKLEEASKAADESERNRKVLENLN).

It belongs to the tropomyosin family. In terms of assembly, homodimer.

Tropomyosin, in association with the troponin complex, plays a central role in the calcium dependent regulation of muscle contraction. This Perna viridis (Asian green mussel) protein is Tropomyosin.